Reading from the N-terminus, the 235-residue chain is Ribonuclease 3 (235 aa).

The RNase III domain occupies 6-131; sequence IDQLERLTEH…LIAVMYLDGG (126 aa). Glu44 is a Mg(2+) binding site. Asp48 is a catalytic residue. Mg(2+)-binding residues include Asp117 and Glu120. The active site involves Glu120. A DRBM domain is found at 156 to 225; sequence DAKTELQEWA…AEKVLRREGI (70 aa).

This sequence belongs to the ribonuclease III family. Homodimer. The cofactor is Mg(2+).

Its subcellular location is the cytoplasm. The enzyme catalyses Endonucleolytic cleavage to 5'-phosphomonoester.. Its function is as follows. Digests double-stranded RNA. Involved in the processing of primary rRNA transcript to yield the immediate precursors to the large and small rRNAs (23S and 16S). Processes some mRNAs, and tRNAs when they are encoded in the rRNA operon. Processes pre-crRNA and tracrRNA of type II CRISPR loci if present in the organism. In Bartonella quintana (strain Toulouse) (Rochalimaea quintana), this protein is Ribonuclease 3.